A 180-amino-acid chain; its full sequence is Sec-independent protein translocase protein TatB (180 aa).

A helical transmembrane segment spans residues 1 to 21; it reads MFDIGWSELLVIGVVALIAIG. Residues 95 to 180 are disordered; sequence IEGVDKPVES…AERLKDAKAS (86 aa). Low complexity predominate over residues 103–123; it reads ESQPAASAAPETSATVEAPAT. Positions 170 to 180 are enriched in basic and acidic residues; the sequence is EAERLKDAKAS.

Belongs to the TatB family. As to quaternary structure, the Tat system comprises two distinct complexes: a TatABC complex, containing multiple copies of TatA, TatB and TatC subunits, and a separate TatA complex, containing only TatA subunits. Substrates initially bind to the TatABC complex, which probably triggers association of the separate TatA complex to form the active translocon.

It localises to the cell inner membrane. In terms of biological role, part of the twin-arginine translocation (Tat) system that transports large folded proteins containing a characteristic twin-arginine motif in their signal peptide across membranes. Together with TatC, TatB is part of a receptor directly interacting with Tat signal peptides. TatB may form an oligomeric binding site that transiently accommodates folded Tat precursor proteins before their translocation. This chain is Sec-independent protein translocase protein TatB, found in Bradyrhizobium sp. (strain BTAi1 / ATCC BAA-1182).